We begin with the raw amino-acid sequence, 319 residues long: Formimidoylglutamase (319 aa).

The Mn(2+) site is built by H127, D150, H152, D154, D242, and D244.

It belongs to the arginase family. Mn(2+) is required as a cofactor.

It carries out the reaction N-formimidoyl-L-glutamate + H2O = formamide + L-glutamate. The protein operates within amino-acid degradation; L-histidine degradation into L-glutamate; L-glutamate from N-formimidoyl-L-glutamate (hydrolase route): step 1/1. Catalyzes the conversion of N-formimidoyl-L-glutamate to L-glutamate and formamide. This is Formimidoylglutamase from Halalkalibacterium halodurans (strain ATCC BAA-125 / DSM 18197 / FERM 7344 / JCM 9153 / C-125) (Bacillus halodurans).